A 377-amino-acid polypeptide reads, in one-letter code: UPF0754 membrane protein lwe2241 (377 aa).

Transmembrane regions (helical) follow at residues 1-21 (MSVL…GAMT) and 357-377 (YLGG…AIWI).

The protein belongs to the UPF0754 family.

It localises to the cell membrane. This is UPF0754 membrane protein lwe2241 from Listeria welshimeri serovar 6b (strain ATCC 35897 / DSM 20650 / CCUG 15529 / CIP 8149 / NCTC 11857 / SLCC 5334 / V8).